The chain runs to 343 residues: Heat-inducible transcription repressor HrcA (343 aa).

The protein belongs to the HrcA family.

Negative regulator of class I heat shock genes (grpE-dnaK-dnaJ and groELS operons). Prevents heat-shock induction of these operons. The chain is Heat-inducible transcription repressor HrcA from Thermoanaerobacter pseudethanolicus (strain ATCC 33223 / 39E) (Clostridium thermohydrosulfuricum).